Reading from the N-terminus, the 327-residue chain is DNA-directed RNA polymerase subunit alpha (327 aa).

The alpha N-terminal domain (alpha-NTD) stretch occupies residues 1 to 231 (MIYQMQMPAK…DHIMYFANFS (231 aa)). The alpha C-terminal domain (alpha-CTD) stretch occupies residues 247–327 (DEFESMRKLL…GMDITRYQMK (81 aa)).

The protein belongs to the RNA polymerase alpha chain family. In terms of assembly, homodimer. The RNAP catalytic core consists of 2 alpha, 1 beta, 1 beta' and 1 omega subunit. When a sigma factor is associated with the core the holoenzyme is formed, which can initiate transcription.

It carries out the reaction RNA(n) + a ribonucleoside 5'-triphosphate = RNA(n+1) + diphosphate. Functionally, DNA-dependent RNA polymerase catalyzes the transcription of DNA into RNA using the four ribonucleoside triphosphates as substrates. The protein is DNA-directed RNA polymerase subunit alpha of Chlorobium phaeobacteroides (strain DSM 266 / SMG 266 / 2430).